A 205-amino-acid chain; its full sequence is FMN-dependent NADH:quinone oxidoreductase (205 aa).

FMN-binding positions include Ser-10 and 16-18 (SVS).

Belongs to the azoreductase type 1 family. As to quaternary structure, homodimer. FMN is required as a cofactor.

The enzyme catalyses 2 a quinone + NADH + H(+) = 2 a 1,4-benzosemiquinone + NAD(+). The catalysed reaction is N,N-dimethyl-1,4-phenylenediamine + anthranilate + 2 NAD(+) = 2-(4-dimethylaminophenyl)diazenylbenzoate + 2 NADH + 2 H(+). Functionally, quinone reductase that provides resistance to thiol-specific stress caused by electrophilic quinones. Its function is as follows. Also exhibits azoreductase activity. Catalyzes the reductive cleavage of the azo bond in aromatic azo compounds to the corresponding amines. The protein is FMN-dependent NADH:quinone oxidoreductase of Agrobacterium fabrum (strain C58 / ATCC 33970) (Agrobacterium tumefaciens (strain C58)).